Here is a 223-residue protein sequence, read N- to C-terminus: Cuticular glutathione peroxidase (223 aa).

Positions 1 to 19 (MSAQLLILSHVVLLQLIVA) are cleaved as a signal peptide. N39 carries an N-linked (GlcNAc...) asparagine glycan. C74 is an active-site residue. N92 carries N-linked (GlcNAc...) asparagine glycosylation.

Belongs to the glutathione peroxidase family. In terms of assembly, homotetramer.

It is found in the secreted. The catalysed reaction is 2 glutathione + H2O2 = glutathione disulfide + 2 H2O. Its function is as follows. Could inhibit the oxidative burst of leukocytes and neutralize the secondary products of lipid peroxidation, thus providing the resistance of these parasites to immune effector mechanisms and their persistence in the mammalian host. It may also be involved in the formation of cross-linking residues such as dityrosine, trityrosine and isotrityrosine identified in cuticular collagen. Highly cross-linked external cortex may also serve to protect the parasite from immune attack. In Wuchereria bancrofti, this protein is Cuticular glutathione peroxidase.